The following is a 110-amino-acid chain: RNA silencing suppressor (110 aa).

Residues 50-53 are basic; the sequence is RRRR. The C4-type zinc-finger motif lies at 60 to 81; that stretch reads CERCYRVYPPLPFSKKCDNRTC.

The protein belongs to the carlaviruses nucleic acid-binding protein family.

Suppressor of viral-induced RNA silencing. The potential mechanism of action is based on sequestering siRNAs. This is RNA silencing suppressor from Helenium virus S (HelVS).